The chain runs to 88 residues: MALKERLGTVVSDKMDKTVVVAVVNRFPHSIYQKTVSRTTRYKAHDEENNCKVGDRVRITETRPLSATKRWSVAEVLRTTKQEKEAVK.

This sequence belongs to the universal ribosomal protein uS17 family. In terms of assembly, part of the 30S ribosomal subunit.

One of the primary rRNA binding proteins, it binds specifically to the 5'-end of 16S ribosomal RNA. This chain is Small ribosomal subunit protein uS17, found in Prochlorococcus marinus (strain SARG / CCMP1375 / SS120).